The sequence spans 197 residues: ATP-dependent Clp protease proteolytic subunit (197 aa).

S98 functions as the Nucleophile in the catalytic mechanism. H123 is a catalytic residue.

It belongs to the peptidase S14 family. As to quaternary structure, fourteen ClpP subunits assemble into 2 heptameric rings which stack back to back to give a disk-like structure with a central cavity, resembling the structure of eukaryotic proteasomes.

The protein resides in the cytoplasm. The enzyme catalyses Hydrolysis of proteins to small peptides in the presence of ATP and magnesium. alpha-casein is the usual test substrate. In the absence of ATP, only oligopeptides shorter than five residues are hydrolyzed (such as succinyl-Leu-Tyr-|-NHMec, and Leu-Tyr-Leu-|-Tyr-Trp, in which cleavage of the -Tyr-|-Leu- and -Tyr-|-Trp bonds also occurs).. Cleaves peptides in various proteins in a process that requires ATP hydrolysis. Has a chymotrypsin-like activity. Plays a major role in the degradation of misfolded proteins. In Anaplasma phagocytophilum (strain HZ), this protein is ATP-dependent Clp protease proteolytic subunit.